The primary structure comprises 196 residues: ECF RNA polymerase sigma factor SigM (196 aa).

The tract at residues 39-105 is sigma-70 factor domain-2; the sequence is LFRRHHRQLH…ACLDRLRRAK (67 aa). An Interaction with polymerase core subunit RpoC motif is present at residues 63–66; that stretch reads DALQ. Residues 130 to 181 form a sigma-70 factor domain-4 region; it reads AVQRALMRLPVEQRAAVVAVDMQGYSIADTARMLGVAEGTVKSRCARARARL. A DNA-binding region (H-T-H motif) is located at residues 156–175; that stretch reads IADTARMLGVAEGTVKSRCA.

Belongs to the sigma-70 factor family. ECF subfamily. In terms of assembly, interacts transiently with the RNA polymerase catalytic core formed by RpoA, RpoB, RpoC and RpoZ (2 alpha, 1 beta, 1 beta' and 1 omega subunit) to form the RNA polymerase holoenzyme that can initiate transcription. Interacts (via sigma-70 factor domain 4) with anti-sigma-M factor RsmA.

In terms of biological role, sigma factors are initiation factors that promote the attachment of RNA polymerase to specific initiation sites and are then released. Extracytoplasmic function (ECF) sigma factors are held in an inactive form by an anti-sigma factor until released by regulated intramembrane proteolysis. This chain is ECF RNA polymerase sigma factor SigM (sigM), found in Mycobacterium tuberculosis (strain ATCC 35801 / TMC 107 / Erdman).